We begin with the raw amino-acid sequence, 325 residues long: MTITANKRHYLEKVSHQGIISALAFDQRGALKQMMAAHQEGEATVTQIETLKVLVSEELTPYASSILLDPEYGLLATKVKANQTGLLLVYEKTGYDATTTSRLPDCLVEWSVKRLKAAGADAIKFLLYYDVDGDEQINLQKQAYIERIGSECTAEDIPFFLELLSYDERISDNNSAAYAKLKPHKVNGAMSVFSDKRFGVDVLKVEVPVNMAYVEGFTEGEVHYSQAEAIKAFQDQEAASHLPYIYLSAGVSAKLFQETLYFAAAAGAQFSGVLCGRATWAGSVPVYITKGEDEARKWLCTEGFQNIDELNRVLEETASPWTEKI.

Belongs to the aldolase LacD family.

It catalyses the reaction D-tagatofuranose 1,6-bisphosphate = D-glyceraldehyde 3-phosphate + dihydroxyacetone phosphate. The protein operates within carbohydrate metabolism; D-tagatose 6-phosphate degradation; D-glyceraldehyde 3-phosphate and glycerone phosphate from D-tagatose 6-phosphate: step 2/2. The chain is Tagatose 1,6-diphosphate aldolase 1 (lacD1) from Streptococcus pyogenes serotype M3 (strain ATCC BAA-595 / MGAS315).